A 158-amino-acid polypeptide reads, in one-letter code: Small ribosomal subunit protein uS9 (158 aa).

It belongs to the universal ribosomal protein uS9 family.

The protein is Small ribosomal subunit protein uS9 of Brucella canis (strain ATCC 23365 / NCTC 10854 / RM-666).